We begin with the raw amino-acid sequence, 359 residues long: Glycerol-1-phosphate dehydrogenase [NAD(P)+] (359 aa).

Residues 107–111 (GRVID) and 129–132 (TAAS) contribute to the NAD(+) site. Residue aspartate 134 participates in substrate binding. Residue serine 138 participates in NAD(+) binding. Aspartate 181 serves as a coordination point for substrate. Residues aspartate 181 and histidine 261 each coordinate Zn(2+). Histidine 265 contributes to the substrate binding site. Histidine 277 contacts Zn(2+).

It belongs to the glycerol-1-phosphate dehydrogenase family. Zn(2+) is required as a cofactor.

The protein resides in the cytoplasm. The enzyme catalyses sn-glycerol 1-phosphate + NAD(+) = dihydroxyacetone phosphate + NADH + H(+). The catalysed reaction is sn-glycerol 1-phosphate + NADP(+) = dihydroxyacetone phosphate + NADPH + H(+). The protein operates within membrane lipid metabolism; glycerophospholipid metabolism. In terms of biological role, catalyzes the NAD(P)H-dependent reduction of dihydroxyacetonephosphate (DHAP or glycerone phosphate) to glycerol 1-phosphate (G1P). The G1P thus generated is used as the glycerophosphate backbone of phospholipids in the cellular membranes of Archaea. The polypeptide is Glycerol-1-phosphate dehydrogenase [NAD(P)+] (Methanosphaerula palustris (strain ATCC BAA-1556 / DSM 19958 / E1-9c)).